We begin with the raw amino-acid sequence, 212 residues long: External core antigen (212 aa).

A signal peptide spans 1 to 19 (MQLFHLCLIISCSCPTVQA). An HBEAG region spans residues 25 to 27 (GWL). Positions 172–212 (LPETAVVRRRGRSPRRRTPSPRRRRSQSPRRRRSQSPASQC) are disordered. The segment covering 178–205 (VRRRGRSPRRRTPSPRRRRSQSPRRRRS) has biased composition (basic residues). The 1; half-length repeat unit spans residues 184–190 (SPRRRTP). Residues 184–206 (SPRRRTPSPRRRRSQSPRRRRSQ) are 3 X 8 AA repeats of S-P-R-R-R-R-S-Q. Positions 184-212 (SPRRRTPSPRRRRSQSPRRRRSQSPASQC) are excised as a propeptide. 2 tandem repeats follow at residues 191–198 (SPRRRRSQ) and 199–206 (SPRRRRSQ).

It belongs to the orthohepadnavirus precore antigen family. In terms of assembly, homodimerizes. Post-translationally, phosphorylated. In terms of processing, cleaved by host furin.

It localises to the secreted. The protein localises to the host nucleus. Its function is as follows. May regulate immune response to the intracellular capsid in acting as a T-cell tolerogen, by having an immunoregulatory effect which prevents destruction of infected cells by cytotoxic T-cells. This immune regulation may predispose to chronicity during perinatal infections and prevent severe liver injury during adult infections. In Gorilla gorilla (western gorilla), this protein is External core antigen.